The primary structure comprises 319 residues: Vesicle-associated membrane protein-associated protein scs22 (319 aa).

Residues 1-121 (MALECDSTIV…SERKIRCVYS (121 aa)) enclose the MSP domain. Topologically, residues 1 to 298 (MALECDSTIV…GAKVVPQIHN (298 aa)) are cytoplasmic. Over residues 127-150 (ANAHANAHHQPAQTTTTSIPTSAT) the composition is skewed to low complexity. The interval 127-244 (ANAHANAHHQ…TTSPNNENNA (118 aa)) is disordered. 3 stretches are compositionally biased toward polar residues: residues 151–165 (DNYT…QSYS), 185–201 (STAT…SAVS), and 231–244 (SVPT…ENNA). Position 236 is a phosphothreonine (threonine 236). Residues serine 237 and serine 281 each carry the phosphoserine modification. Residues 299 to 319 (TVTVQTAFLLAIICFLIGLLF) form a helical; Anchor for type IV membrane protein membrane-spanning segment.

This sequence belongs to the VAMP-associated protein (VAP) (TC 9.B.17) family. As to quaternary structure, interacts with epr1.

It is found in the endoplasmic reticulum membrane. Vesicle-associated membrane protein-associated protein (VAP) implicated in maintaining the cortical endoplasmic reticulum (ER)-plasma membrane (PM) attachment. ER-PM contacts function to modulate the distribution of contractile ring components to ensure robust ring assembly. ER-PM contacts function also in controlling exocytosis and maintenance of cell polarity regulating cell shape. VAPs play an important role in regulating eisosome assembly. VAPs also contribute to ER-phagy by tethering atg8 to the ER membrane, but also by maintaining the ER-plasma membrane contact. The protein is Vesicle-associated membrane protein-associated protein scs22 (scs22) of Schizosaccharomyces pombe (strain 972 / ATCC 24843) (Fission yeast).